The chain runs to 613 residues: Vitamin B12 transporter BtuB (613 aa).

A signal peptide spans 1–22; it reads MQKSLLAIAMASLLTPISYLHA. Residues 29–36 carry the TonB box motif; it reads DTVVVTAN. The region spanning 41 to 154 is the TBDR plug domain; the sequence is VESSVLASIS…IGGVIHIKTI (114 aa). In terms of domain architecture, TBDR beta-barrel spans 159-613; the sequence is QTKHDANLGY…NWFATVNYRF (455 aa). Residues 591-613 carry the TonB C-terminal box motif; the sequence is HSSGGKYYVGEGRNWFATVNYRF.

The protein belongs to the TonB-dependent receptor family. BtuB (TC 1.B.14.3.1) subfamily.

It localises to the cell outer membrane. Its function is as follows. Involved in the active translocation of vitamin B12 (cyanocobalamin) across the outer membrane to the periplasmic space. It derives its energy for transport by interacting with the trans-periplasmic membrane protein TonB. This Vibrio vulnificus (strain YJ016) protein is Vitamin B12 transporter BtuB.